The chain runs to 40 residues: MANTTGRIPLWLIGTIAGILVIGLVGIFFYGSYSGLGSSL.

Residues 8-28 (IPLWLIGTIAGILVIGLVGIF) form a helical membrane-spanning segment.

The protein belongs to the PsbJ family. In terms of assembly, PSII is composed of 1 copy each of membrane proteins PsbA, PsbB, PsbC, PsbD, PsbE, PsbF, PsbH, PsbI, PsbJ, PsbK, PsbL, PsbM, PsbT, PsbX, PsbY, PsbZ, Psb30/Ycf12, at least 3 peripheral proteins of the oxygen-evolving complex and a large number of cofactors. It forms dimeric complexes.

It is found in the plastid. The protein resides in the chloroplast thylakoid membrane. Its function is as follows. One of the components of the core complex of photosystem II (PSII). PSII is a light-driven water:plastoquinone oxidoreductase that uses light energy to abstract electrons from H(2)O, generating O(2) and a proton gradient subsequently used for ATP formation. It consists of a core antenna complex that captures photons, and an electron transfer chain that converts photonic excitation into a charge separation. The protein is Photosystem II reaction center protein J of Anthoceros angustus (Hornwort).